The primary structure comprises 281 residues: Large ribosomal subunit protein uL2 (281 aa).

The interval 213–281 (RNRHKGIRPT…LIIRRRKESK (69 aa)) is disordered.

Belongs to the universal ribosomal protein uL2 family. In terms of assembly, part of the 50S ribosomal subunit. Forms a bridge to the 30S subunit in the 70S ribosome.

In terms of biological role, one of the primary rRNA binding proteins. Required for association of the 30S and 50S subunits to form the 70S ribosome, for tRNA binding and peptide bond formation. It has been suggested to have peptidyltransferase activity; this is somewhat controversial. Makes several contacts with the 16S rRNA in the 70S ribosome. In Mycoplasmopsis pulmonis (strain UAB CTIP) (Mycoplasma pulmonis), this protein is Large ribosomal subunit protein uL2.